Consider the following 107-residue polypeptide: DNA-directed RNA polymerase subunit omega (107 aa).

It belongs to the RNA polymerase subunit omega family. In terms of assembly, the RNAP catalytic core consists of 2 alpha, 1 beta, 1 beta' and 1 omega subunit. When a sigma factor is associated with the core the holoenzyme is formed, which can initiate transcription.

The enzyme catalyses RNA(n) + a ribonucleoside 5'-triphosphate = RNA(n+1) + diphosphate. In terms of biological role, promotes RNA polymerase assembly. Latches the N- and C-terminal regions of the beta' subunit thereby facilitating its interaction with the beta and alpha subunits. The chain is DNA-directed RNA polymerase subunit omega from Mycolicibacterium smegmatis (strain ATCC 700084 / mc(2)155) (Mycobacterium smegmatis).